A 386-amino-acid polypeptide reads, in one-letter code: Flap endonuclease 1 (386 aa).

Residues 1-104 are N-domain; sequence MGILGLSKLI…GELAKRAERR (104 aa). Residue Asp34 coordinates Mg(2+). DNA is bound by residues Arg47 and Arg70. Mg(2+) contacts are provided by Asp86, Glu158, Glu160, Asp179, and Asp181. An I-domain region spans residues 122-253; that stretch reads EIEKFNRRLV…KRAIELINNY (132 aa). Glu158 serves as a coordination point for DNA. Residues Gly231 and Asp233 each contribute to the DNA site. Asp233 contributes to the Mg(2+) binding site. The interaction with PCNA stretch occupies residues 336–344; the sequence is TQVRLDSFF. A disordered region spans residues 351-386; it reads PNAVHAAKRKAEEAKKSANNKKAKTSGGAARGRRPK.

Belongs to the XPG/RAD2 endonuclease family. FEN1 subfamily. In terms of assembly, interacts with PCNA. Three molecules of FEN1 bind to one PCNA trimer with each molecule binding to one PCNA monomer. PCNA stimulates the nuclease activity without altering cleavage specificity. It depends on Mg(2+) as a cofactor. In terms of processing, phosphorylated. Phosphorylation upon DNA damage induces relocalization to the nuclear plasma.

The protein localises to the nucleus. It localises to the nucleolus. It is found in the nucleoplasm. The protein resides in the mitochondrion. Structure-specific nuclease with 5'-flap endonuclease and 5'-3' exonuclease activities involved in DNA replication and repair. During DNA replication, cleaves the 5'-overhanging flap structure that is generated by displacement synthesis when DNA polymerase encounters the 5'-end of a downstream Okazaki fragment. It enters the flap from the 5'-end and then tracks to cleave the flap base, leaving a nick for ligation. Also involved in the long patch base excision repair (LP-BER) pathway, by cleaving within the apurinic/apyrimidinic (AP) site-terminated flap. Acts as a genome stabilization factor that prevents flaps from equilibrating into structures that lead to duplications and deletions. Also possesses 5'-3' exonuclease activity on nicked or gapped double-stranded DNA, and exhibits RNase H activity. Also involved in replication and repair of rDNA and in repairing mitochondrial DNA. The chain is Flap endonuclease 1 from Drosophila persimilis (Fruit fly).